The chain runs to 515 residues: Na(+)/H(+) antiporter NhaB (515 aa).

The next 11 membrane-spanning stretches (helical) occupy residues 23–43, 45–65, 96–116, 136–156, 204–224, 245–265, 305–325, 349–369, 393–413, 449–469, and 480–500; these read LAII…NPFV, GWLL…CYPL, VVLL…LLLF, CLAS…AVVI, LMMH…VGEP, APIT…VEHF, ALIG…VGLI, FEEA…VAVI, LFYL…VGTV, ATPN…SPLI, and ALPY…FLLI.

It belongs to the NhaB Na(+)/H(+) (TC 2.A.34) antiporter family.

Its subcellular location is the cell inner membrane. It carries out the reaction 2 Na(+)(in) + 3 H(+)(out) = 2 Na(+)(out) + 3 H(+)(in). Its function is as follows. Na(+)/H(+) antiporter that extrudes sodium in exchange for external protons. This is Na(+)/H(+) antiporter NhaB from Photorhabdus laumondii subsp. laumondii (strain DSM 15139 / CIP 105565 / TT01) (Photorhabdus luminescens subsp. laumondii).